The chain runs to 932 residues: Chitin synthase regulatory factor 3 (932 aa).

The segment covering 1–16 (MKDSHSSRRKYEKEKL) has biased composition (basic and acidic residues). Disordered regions lie at residues 1–53 (MKDS…PTSR), 264–356 (TLEE…LQQP), and 374–406 (EVPA…NPTV). Composition is skewed to polar residues over residues 35-53 (SGNT…PTSR), 274-285 (DSITNTVSNASS), and 308-319 (SHFSSTDSNTDS). The span at 337-349 (KSSETLKNPRNDD) shows a compositional bias: basic and acidic residues. Serine 393 carries the post-translational modification Phosphoserine. Sel1-like repeat units follow at residues 638–674 (PEAL…KKGH), 675–710 (PLSN…EMDV), 711–747 (VEAM…KSKG), 751–788 (VRAM…VYGY), 789–825 (AAAQ…EQDY), 826–863 (GEAE…CKGL), and 864–899 (AKAQ…KQGF). The tract at residues 905–932 (RLEEQALSSKQTHSKAPKKKQQEQCVVM) is disordered.

The sequence is that of Chitin synthase regulatory factor 3 (chr3) from Schizosaccharomyces pombe (strain 972 / ATCC 24843) (Fission yeast).